The following is a 491-amino-acid chain: 3-octaprenyl-4-hydroxybenzoate carboxy-lyase (491 aa).

Asn-172 is a Mn(2+) binding site. Prenylated FMN contacts are provided by residues 175 to 177, 189 to 191, and 194 to 195; these read IYR, RWL, and RG. Glu-238 provides a ligand contact to Mn(2+). The active-site Proton donor is Asp-287.

Belongs to the UbiD family. Homohexamer. It depends on prenylated FMN as a cofactor. Requires Mn(2+) as cofactor.

The protein localises to the cell membrane. It catalyses the reaction a 4-hydroxy-3-(all-trans-polyprenyl)benzoate + H(+) = a 2-(all-trans-polyprenyl)phenol + CO2. It participates in cofactor biosynthesis; ubiquinone biosynthesis. Functionally, catalyzes the decarboxylation of 3-octaprenyl-4-hydroxy benzoate to 2-octaprenylphenol, an intermediate step in ubiquinone biosynthesis. The protein is 3-octaprenyl-4-hydroxybenzoate carboxy-lyase of Histophilus somni (strain 129Pt) (Haemophilus somnus).